The chain runs to 54 residues: Protein YmjE (54 aa).

The sequence is that of Protein YmjE from Escherichia coli (strain K12).